A 190-amino-acid polypeptide reads, in one-letter code: Crossover junction endodeoxyribonuclease RuvC (190 aa).

Active-site residues include aspartate 8, glutamate 67, and aspartate 139. Mg(2+) is bound by residues aspartate 8, glutamate 67, and aspartate 139.

The protein belongs to the RuvC family. As to quaternary structure, homodimer which binds Holliday junction (HJ) DNA. The HJ becomes 2-fold symmetrical on binding to RuvC with unstacked arms; it has a different conformation from HJ DNA in complex with RuvA. In the full resolvosome a probable DNA-RuvA(4)-RuvB(12)-RuvC(2) complex forms which resolves the HJ. The cofactor is Mg(2+).

Its subcellular location is the cytoplasm. It carries out the reaction Endonucleolytic cleavage at a junction such as a reciprocal single-stranded crossover between two homologous DNA duplexes (Holliday junction).. Its function is as follows. The RuvA-RuvB-RuvC complex processes Holliday junction (HJ) DNA during genetic recombination and DNA repair. Endonuclease that resolves HJ intermediates. Cleaves cruciform DNA by making single-stranded nicks across the HJ at symmetrical positions within the homologous arms, yielding a 5'-phosphate and a 3'-hydroxyl group; requires a central core of homology in the junction. The consensus cleavage sequence is 5'-(A/T)TT(C/G)-3'. Cleavage occurs on the 3'-side of the TT dinucleotide at the point of strand exchange. HJ branch migration catalyzed by RuvA-RuvB allows RuvC to scan DNA until it finds its consensus sequence, where it cleaves and resolves the cruciform DNA. This chain is Crossover junction endodeoxyribonuclease RuvC, found in Haemophilus influenzae (strain PittEE).